The primary structure comprises 502 residues: Keratin, type II cytoskeletal 8 (502 aa).

The segment at Met-1–Glu-98 is head. Phosphoserine occurs at positions 13, 26, 37, and 40. Residues Glu-99–Leu-134 are coil 1A. The IF rod domain maps to Glu-99 to Leu-410. The linker 1 stretch occupies residues Gln-135 to Tyr-151. Residues Ile-152–Met-243 form a coil 1B region. The segment at Gln-244–Ile-267 is linker 12. Positions Ile-268–Glu-406 are coil 2. The necessary for interaction with PNN stretch occupies residues Ala-269–Leu-390. A tail region spans residues Glu-407–Pro-502. Phosphoserine occurs at positions 425, 428, 436, and 444.

This sequence belongs to the intermediate filament family. In terms of assembly, heterotetramer of two type I and two type II keratins. Keratin-8 associates with keratin-18. In terms of tissue distribution, expressed in oocytes, eggs, embryos, liver and intestinal mucosa.

Its subcellular location is the cytoplasm. The protein resides in the nucleus. The protein localises to the nucleoplasm. It localises to the nucleus matrix. In terms of biological role, together with KRT19, helps to link the contractile apparatus to dystrophin at the costameres of striated muscle. The polypeptide is Keratin, type II cytoskeletal 8 (Xenopus laevis (African clawed frog)).